Here is a 350-residue protein sequence, read N- to C-terminus: C4-dicarboxylate-binding protein DctB (350 aa).

Positions 1–18 (MKSLLACLALMIAGIATA) are cleaved as a signal peptide.

It belongs to the bacterial solute-binding protein 7 family.

The protein resides in the secreted. Part of the binding-protein-dependent transport system for uptake of C4-dicarboxylates. Responsible for growth on fumarate and succinate but not malate. Is not directly involved in C4-dicarboxylate uptake, but plays a sensory role in the DctS/DctR two-component system which regulates the expression of the dctA C4-dicarboxylate transporter. The polypeptide is C4-dicarboxylate-binding protein DctB (dctB) (Bacillus subtilis (strain 168)).